A 156-amino-acid polypeptide reads, in one-letter code: Deoxyuridine 5'-triphosphate nucleotidohydrolase (156 aa).

Substrate is bound by residues 76 to 78 (RSG), N89, 93 to 95 (TVD), and K103.

It belongs to the dUTPase family. Mg(2+) serves as cofactor.

The enzyme catalyses dUTP + H2O = dUMP + diphosphate + H(+). Its pathway is pyrimidine metabolism; dUMP biosynthesis; dUMP from dCTP (dUTP route): step 2/2. Functionally, this enzyme is involved in nucleotide metabolism: it produces dUMP, the immediate precursor of thymidine nucleotides and it decreases the intracellular concentration of dUTP so that uracil cannot be incorporated into DNA. The protein is Deoxyuridine 5'-triphosphate nucleotidohydrolase of Rhizobium leguminosarum bv. trifolii (strain WSM2304).